Here is a 345-residue protein sequence, read N- to C-terminus: Anthranilate phosphoribosyltransferase (345 aa).

5-phospho-alpha-D-ribose 1-diphosphate contacts are provided by residues glycine 79, 82-83 (GD), threonine 87, 89-92 (NVST), 106-114 (KHGNRAVSG), and serine 118. Glycine 79 contributes to the anthranilate binding site. A Mg(2+)-binding site is contributed by serine 91. Residue asparagine 109 coordinates anthranilate. Arginine 164 contributes to the anthranilate binding site. Aspartate 223 and glutamate 224 together coordinate Mg(2+).

This sequence belongs to the anthranilate phosphoribosyltransferase family. In terms of assembly, homodimer. Mg(2+) serves as cofactor.

It catalyses the reaction N-(5-phospho-beta-D-ribosyl)anthranilate + diphosphate = 5-phospho-alpha-D-ribose 1-diphosphate + anthranilate. The protein operates within amino-acid biosynthesis; L-tryptophan biosynthesis; L-tryptophan from chorismate: step 2/5. Functionally, catalyzes the transfer of the phosphoribosyl group of 5-phosphorylribose-1-pyrophosphate (PRPP) to anthranilate to yield N-(5'-phosphoribosyl)-anthranilate (PRA). This Saccharolobus islandicus (strain M.14.25 / Kamchatka #1) (Sulfolobus islandicus) protein is Anthranilate phosphoribosyltransferase.